The following is a 326-amino-acid chain: Target of rapamycin complex subunit LST8 (326 aa).

M1 is modified (N-acetylmethionine). WD repeat units follow at residues 1–37, 40–80, 83–122, 126–165, and 168–207; these read MNTT…CTRT, HQDS…PIIS, GVSK…LQCQ, QVNA…NEQL, and EPEF…GDEV. T51 carries the post-translational modification Phosphothreonine. K86 is covalently cross-linked (Glycyl lysine isopeptide (Lys-Gly) (interchain with G-Cter in SUMO3)). Glycyl lysine isopeptide (Lys-Gly) (interchain with G-Cter in SUMO3) cross-links involve residues K215, K245, and K261. The stretch at 218 to 257 is one WD 6 repeat; it reads AHTRYALQCRFSPDSTLLATCSADQTCKIWRTSNFSLMTE. A WD 7 repeat occupies 268–309; that stretch reads SSRGWMWGCAFSGDSQYIVTASSDNLARLWCVETGEIKREYG. K305 is covalently cross-linked (Glycyl lysine isopeptide (Lys-Gly) (interchain with G-Cter in SUMO3); alternate). Glycyl lysine isopeptide (Lys-Gly) (interchain with G-Cter in ubiquitin); alternate cross-links involve residues K305 and K313. K313 is covalently cross-linked (Glycyl lysine isopeptide (Lys-Gly) (interchain with G-Cter in SUMO1); alternate).

The protein belongs to the WD repeat LST8 family. Part of the mechanistic target of rapamycin complex 1 (mTORC1) which contains MTOR, MLST8 and RPTOR. mTORC1 associates with AKT1S1/PRAS40, which inhibits its activity. mTORC1 binds to and is inhibited by FKBP12-rapamycin. Within mTORC1, interacts directly with MTOR and RPTOR. Component of the mechanistic target of rapamycin complex 2 (mTORC2), consisting in two heterotretramers composed of MTOR, MLST8, RICTOR and MAPKAP1/SIN1. Contrary to mTORC1, mTORC2 does not bind to and is not sensitive to FKBP12-rapamycin. mTORC1 and mTORC2 associate with DEPTOR, which regulates their activity. Interacts with RHEB. Interacts with MEAK7. Interacts with SIK3. Interacts with SLC38A7; this interaction promotes the recruitment of mTORC1 to the lysosome and its subsequent activation. In terms of processing, phosphorylation at Thr-51 by CDK1 promotes ubiquitination by the SCF(FBXW7) complex, followed by degradation. Post-translationally, ubiquitination by the SCF(FBXW7) and SCF(FBXW11) complexes following phosphorylation at Thr-51 by CDK1, leads to its degradation by the proteasome. Ubiquitination at Lys-305 and Lys-313 by TRAF2 via 'Lys-63'-linked polyubiquitin chains inhibits formation of the mTORC2 complex, while promoting formation of the mTORC1 complex: ubiquitination disrupts the interaction between MLST8 and MAPKAP1/SIN1 to favor mTORC1 assembly. Deubiquitination at Lys-305 and Lys-313 by OTUD7B promotes MLST8 interaction with MAPKAP1/SIN1, facilitating mTORC2 assembly. Sumoylation with SUMO1, SUMO2 and SUMO3 promotes assembly of both mTORC1 and mTORC2 complexes. In terms of tissue distribution, expressed at highest levels in the brain and testis, followed by lung, heart, kidney, skeletal muscle, spleen and liver. Also expressed in epididymal, abdominal and brown fat, small intestine and pancreas.

The protein resides in the lysosome membrane. The protein localises to the cytoplasm. Functionally, subunit of both mTORC1 and mTORC2, which regulates cell growth and survival in response to nutrient and hormonal signals. mTORC1 is activated in response to growth factors or amino acids. In response to nutrients, mTORC1 is recruited to the lysosome membrane and promotes protein, lipid and nucleotide synthesis by phosphorylating several substrates, such as ribosomal protein S6 kinase (RPS6KB1 and RPS6KB2) and EIF4EBP1 (4E-BP1). In the same time, it inhibits catabolic pathways by phosphorylating the autophagy initiation components ULK1 and ATG13, as well as transcription factor TFEB, a master regulators of lysosomal biogenesis and autophagy. The mTORC1 complex is inhibited in response to starvation and amino acid depletion. Within mTORC1, MLST8 interacts directly with MTOR and enhances its kinase activity. In nutrient-poor conditions, stabilizes the MTOR-RPTOR interaction and favors RPTOR-mediated inhibition of MTOR activity. As part of the mTORC2 complex, transduces signals from growth factors to pathways involved in proliferation, cytoskeletal organization, lipogenesis and anabolic output. mTORC2 is also activated by growth factors, but seems to be nutrient-insensitive. In response to growth factors, mTORC2 phosphorylates and activates AGC protein kinase family members, including AKT (AKT1, AKT2 and AKT3), PKC (PRKCA, PRKCB and PRKCE) and SGK1. mTORC2 functions upstream of Rho GTPases to regulate the actin cytoskeleton, probably by activating one or more Rho-type guanine nucleotide exchange factors. mTORC2 promotes the serum-induced formation of stress-fibers or F-actin. mTORC2 plays a critical role in AKT1 activation by mediating phosphorylation of different sites depending on the context, such as 'Thr-450', 'Ser-473', 'Ser-477' or 'Thr-479', facilitating the phosphorylation of the activation loop of AKT1 on 'Thr-308' by PDPK1/PDK1 which is a prerequisite for full activation. mTORC2 regulates the phosphorylation of SGK1 at 'Ser-422'. mTORC2 also modulates the phosphorylation of PRKCA on 'Ser-657'. Within mTORC2, MLST8 acts as a bridge between MAPKAP1/SIN1 and MTOR. This chain is Target of rapamycin complex subunit LST8, found in Rattus norvegicus (Rat).